The chain runs to 236 residues: Leucyl/phenylalanyl-tRNA--protein transferase (236 aa).

Belongs to the L/F-transferase family.

It localises to the cytoplasm. It carries out the reaction N-terminal L-lysyl-[protein] + L-leucyl-tRNA(Leu) = N-terminal L-leucyl-L-lysyl-[protein] + tRNA(Leu) + H(+). The catalysed reaction is N-terminal L-arginyl-[protein] + L-leucyl-tRNA(Leu) = N-terminal L-leucyl-L-arginyl-[protein] + tRNA(Leu) + H(+). The enzyme catalyses L-phenylalanyl-tRNA(Phe) + an N-terminal L-alpha-aminoacyl-[protein] = an N-terminal L-phenylalanyl-L-alpha-aminoacyl-[protein] + tRNA(Phe). Functions in the N-end rule pathway of protein degradation where it conjugates Leu, Phe and, less efficiently, Met from aminoacyl-tRNAs to the N-termini of proteins containing an N-terminal arginine or lysine. This chain is Leucyl/phenylalanyl-tRNA--protein transferase, found in Shewanella oneidensis (strain ATCC 700550 / JCM 31522 / CIP 106686 / LMG 19005 / NCIMB 14063 / MR-1).